The chain runs to 147 residues: Hemoglobin subunit beta (147 aa).

Val2 is subject to N-acetylvaline. Residues His3–His147 form the Globin domain. At Thr13 the chain carries Phosphothreonine. Position 45 is a phosphoserine (Ser45). Lys60 bears the N6-acetyllysine mark. His64 contributes to the heme b binding site. Lys83 carries the N6-acetyllysine modification. A heme b-binding site is contributed by His93. Cys94 is subject to S-nitrosocysteine. Residue Lys145 is modified to N6-acetyllysine.

The protein belongs to the globin family. In terms of assembly, heterotetramer of two alpha chains and two beta chains. In terms of tissue distribution, red blood cells.

In terms of biological role, involved in oxygen transport from the lung to the various peripheral tissues. The polypeptide is Hemoglobin subunit beta (HBB) (Papio anubis (Olive baboon)).